The following is a 76-amino-acid chain: Translational regulator CsrA (76 aa).

Belongs to the CsrA/RsmA family. In terms of assembly, homodimer; the beta-strands of each monomer intercalate to form a hydrophobic core, while the alpha-helices form wings that extend away from the core.

It is found in the cytoplasm. In terms of biological role, a translational regulator that binds mRNA to regulate translation initiation and/or mRNA stability. Usually binds in the 5'-UTR at or near the Shine-Dalgarno sequence preventing ribosome-binding, thus repressing translation. Its main target seems to be the major flagellin gene, while its function is anatagonized by FliW. The chain is Translational regulator CsrA from Pseudothermotoga lettingae (strain ATCC BAA-301 / DSM 14385 / NBRC 107922 / TMO) (Thermotoga lettingae).